We begin with the raw amino-acid sequence, 342 residues long: Alpha-(1,3)-fucosyltransferase 7 (342 aa).

Topologically, residues 1–11 are cytoplasmic; the sequence is MQNAGLSPTPS. Residues 12-31 form a helical; Signal-anchor for type II membrane protein membrane-spanning segment; it reads LRALGGLAMAALLSTVWLWW. Residues 32 to 342 lie on the Extracellular side of the membrane; it reads RLGAAPGGAP…YQDLEGWFQA (311 aa). Cysteine 68 and cysteine 76 form a disulfide bridge. Asparagine 81 is a glycosylation site (N-linked (GlcNAc...) asparagine). Cysteine 211 and cysteine 214 are joined by a disulfide. N-linked (GlcNAc...) asparagine glycosylation occurs at asparagine 291. A disulfide bond links cysteine 318 and cysteine 321.

This sequence belongs to the glycosyltransferase 10 family. N-glycosylated. As to expression, expressed in thymus, spleen, liver and lung. Highly expressed in the thymus and lower expressed in the lung.

Its subcellular location is the membrane. The enzyme catalyses an N-acetyl-alpha-neuraminyl-(2-&gt;3)-beta-D-galactosyl-(1-&gt;4)-N-acetyl-beta-D-glucosaminyl derivative + GDP-beta-L-fucose = an alpha-Neu5Ac-(2-&gt;3)-beta-D-Gal-(1-&gt;4)-[alpha-L-Fuc-(1-&gt;3)]-beta-D-GlcNAc derivative + GDP + H(+). The catalysed reaction is a neolactoside IV(3)-alpha-NeuAc-nLc4Cer + GDP-beta-L-fucose = a neolactoside IV(3)-alpha-NeuNAc,III(3)-alpha-Fuc-nLc4Cer + GDP + H(+). It carries out the reaction a neolactoside VI(3)-alpha-NeuNAc-nLc6Cer + GDP-beta-L-fucose = a neolactoside VI(3)-alpha-NeuAc,V(3)-alphaFuc-nLc6Cer + GDP + H(+). It catalyses the reaction an alpha-Neu5Ac-(2-&gt;3)-beta-D-Gal-(1-&gt;4)-beta-D-GlcNAc-(1-&gt;3)-beta-D-Gal-(1-&gt;4)-[alpha-L-Fuc-(1-&gt;3)]-beta-D-GlcNAc derivative + GDP-beta-L-fucose = an alpha-Neu5Ac-(2-&gt;3)-beta-D-Gal-(1-&gt;4)-[alpha-L-Fuc-(1-&gt;3)]-beta-D-GlcNAc-(1-&gt;3)-beta-D-Gal-(1-&gt;4)-[alpha-L-Fuc-(1-&gt;3)]-beta-D-GlcNAc derivative + GDP + H(+). The enzyme catalyses an alpha-Neu5Ac-(2-&gt;3)-beta-D-Gal-(1-&gt;4)-beta-D-GlcNAc6S derivative + GDP-beta-L-fucose = an alpha-Neu5Ac-(2-&gt;3)-beta-D-Gal-(1-&gt;4)-[alpha-L-Fuc-(1-&gt;3)]-beta-D-GlcNAc6S derivative + GDP + H(+). The catalysed reaction is alpha-Neu5Ac-(2-&gt;3)-beta-D-Gal-(1-&gt;4)-beta-D-GlcNAc-(1-&gt;3)-beta-D-Gal-(1-&gt;4)-D-Glc + GDP-beta-L-fucose = alpha-Neu5Ac-(2-&gt;3)-beta-D-Gal-(1-&gt;4)-[alpha-L-Fuc-(1-&gt;3)]-beta-D-GlcNAc-(1-&gt;3)-beta-D-Gal-(1-&gt;4)-D-Glc + GDP + H(+). It carries out the reaction alpha-Neu5Ac-(2-&gt;3)-beta-D-Gal-(1-&gt;4)-beta-D-GlcNAc-(1-&gt;3)-beta-D-Gal-(1-&gt;4)-[alpha-L-Fuc-(1-&gt;3)]-beta-D-GlcNAc-(1-&gt;3)-beta-D-Gal-(1-&gt;4)-beta-D-GlcNAc + GDP-beta-L-fucose = alpha-Neu5Ac-(2-&gt;3)-beta-D-Gal-(1-&gt;4)-[alpha-L-Fuc-(1-&gt;3)]-beta-D-GlcNAc-(1-&gt;3)-beta-D-Gal-(1-&gt;4)-[alpha-L-Fuc-(1-&gt;3)]-beta-D-GlcNAc-(1-&gt;3)-beta-D-Gal-(1-&gt;4)-beta-D-GlcNAc + GDP + H(+). It catalyses the reaction alpha-Neu5Ac-(2-&gt;3)-beta-D-Gal-(1-&gt;4)-beta-D-GlcNAc-(1-&gt;3)-beta-D-Gal-(1-&gt;4)-beta-D-GlcNAc-(1-&gt;3)-beta-D-Gal-(1-&gt;4)-beta-D-GlcNAc + GDP-beta-L-fucose = alpha-Neu5Ac-(2-&gt;3)-beta-D-Gal-(1-&gt;4)-[alpha-L-Fuc-(1-&gt;3)]-beta-D-GlcNAc-(1-&gt;3)-beta-D-Gal-(1-&gt;4)-beta-D-GlcNAc-(1-&gt;3)-beta-D-Gal-(1-&gt;4)-beta-D-GlcNAc + GDP + H(+). Its pathway is protein modification; protein glycosylation. Its activity is regulated as follows. Inhibited by NaCl. Inhibited by GDP in a concentration dependent manner, with an IC(50) value of 93 uM. Also inhibited by GMP and GTP. Inhibited by N-ethylmaleimide. Activated by poly(ethylene glycol) by enhancing the thermal stability of FUT7. Activated by Mn2+, Ca2+, and Mg2+. Both panosialin A and B inhibit activity with IC(50) values of 4.8 and 5.3 ug/ml, respectively. Inhibited by gallic acid (GA) and (-)-epigallocatechin gallate (EGCG) in a time-dependent and irreversible manner with IC(50) values of 60 and 700 nM, respectively. In terms of biological role, catalyzes the transfer of L-fucose, from a guanosine diphosphate-beta-L-fucose, to the N-acetyl glucosamine (GlcNAc) of a distal alpha2,3 sialylated lactosamine unit of a glycoprotein or a glycolipid-linked sialopolylactosamines chain through an alpha-1,3 glycosidic linkage and participates in the final fucosylation step in the biosynthesis of the sialyl Lewis X (sLe(x)), a carbohydrate involved in cell and matrix adhesion during leukocyte trafficking and fertilization. In vitro, also synthesizes sialyl-dimeric-Lex structures, from VIM-2 structures and both di-fucosylated and trifucosylated structures from mono-fucosylated precursors. However does not catalyze alpha 1-3 fucosylation when an internal alpha 1-3 fucosylation is present in polylactosamine chain and the fucosylation rate of the internal GlcNAc residues is reduced once fucose has been added to the distal GlcNAc. Also catalyzes the transfer of a fucose from GDP-beta-fucose to the 6-sulfated a(2,3)sialylated substrate to produce 6-sulfo sLex mediating significant L-selectin-dependent cell adhesion. Through sialyl-Lewis(x) biosynthesis, can control SELE- and SELP-mediated cell adhesion with leukocytes and allows leukocytes tethering and rolling along the endothelial tissue thereby enabling the leukocytes to accumulate at a site of inflammation. May enhance embryo implantation through sialyl Lewis X (sLeX)-mediated adhesion of embryo cells to endometrium. May affect insulin signaling by up-regulating the phosphorylation and expression of some signaling molecules involved in the insulin-signaling pathway through SLe(x) which is present on the glycans of the INSRR alpha subunit. This chain is Alpha-(1,3)-fucosyltransferase 7, found in Bos taurus (Bovine).